Here is a 234-residue protein sequence, read N- to C-terminus: tRNA (guanine-N(1)-)-methyltransferase (234 aa).

Residues Gly110 and 134 to 139 (IGDYVL) each bind S-adenosyl-L-methionine.

The protein belongs to the RNA methyltransferase TrmD family. As to quaternary structure, homodimer.

The protein resides in the cytoplasm. The catalysed reaction is guanosine(37) in tRNA + S-adenosyl-L-methionine = N(1)-methylguanosine(37) in tRNA + S-adenosyl-L-homocysteine + H(+). Its function is as follows. Specifically methylates guanosine-37 in various tRNAs. This is tRNA (guanine-N(1)-)-methyltransferase from Tropheryma whipplei (strain Twist) (Whipple's bacillus).